A 154-amino-acid polypeptide reads, in one-letter code: Leghemoglobin-1 (154 aa).

In terms of domain architecture, Globin spans 3-151 (VLTDVQVALV…LAIIIKKEMK (149 aa)). Serine 46 lines the heme b pocket. Residue serine 46 is modified to Phosphoserine. Histidine 64 contributes to the O2 binding site. Lysine 67, histidine 98, and lysine 101 together coordinate heme b. Nitrated tyrosine is present on tyrosine 139.

This sequence belongs to the plant globin family. In terms of assembly, monomer. Post-translationally, nitrated in effective nodules and particularly in hypoxic conditions; this mechanism may play a protective role in the symbiosis by buffering toxic peroxynitrite NO(2)(-). Nitration level decrease during nodule senescence. In terms of processing, phosphorylation at Ser-46 disrupts the molecular environment of its porphyrin ring oxygen binding pocket, thus leading to a reduced oxygen consumption and to the delivery of oxygen O(2) to symbiosomes. Accumulates in developing root nodules and present in roots, especially in the upper part. Detected in leaves at low levels.

The protein localises to the cytoplasm. It is found in the cytosol. Its subcellular location is the nucleus. Functionally, leghemoglobin that reversibly binds oxygen O(2) through a pentacoordinated heme iron. In root nodules, facilitates the diffusion of oxygen to the bacteroids while preventing the bacterial nitrogenase from being inactivated by buffering dioxygen, nitric oxide and carbon monoxide, and promoting the formation of reactive oxygen species (ROS, e.g. H(2)O(2)). This role is essential for symbiotic nitrogen fixation (SNF). This is Leghemoglobin-1 from Lupinus luteus (European yellow lupine).